The sequence spans 313 residues: Adhesin MafA 2/3 (313 aa).

A signal peptide spans 1-14 (MKTLLLLIPLVLTA). The N-palmitoyl cysteine moiety is linked to residue C15. Residue C15 is the site of S-diacylglycerol cysteine attachment. Over residues 282-298 (GDTTAQNRPDFKQNNGK) the composition is skewed to polar residues. The interval 282 to 313 (GDTTAQNRPDFKQNNGKNPDVGNEVIRRRKGG) is disordered.

This sequence belongs to the MafA family.

The protein resides in the cell outer membrane. The protein is Adhesin MafA 2/3 (mafA2) of Neisseria gonorrhoeae (strain ATCC 700825 / FA 1090).